The primary structure comprises 627 residues: Hemocyanin B chain (627 aa).

Positions 173, 177, and 204 each coordinate Cu cation. 2 N-linked (GlcNAc...) asparagine glycosylation sites follow: N312 and N316. Residues H324, H328, and H364 each contribute to the Cu cation site. Residues C534 and C582 are joined by a disulfide bond.

The protein belongs to the tyrosinase family. Hemocyanin subfamily. Tarantula hemocyanin is a 24-chain polymer with seven different chains identified. As to expression, hemolymph.

The protein resides in the secreted. It localises to the extracellular space. Functionally, hemocyanins are copper-containing oxygen carriers occurring freely dissolved in the hemolymph of many mollusks and arthropods. The chain is Hemocyanin B chain (HCB) from Aphonopelma sp. (American tarantula).